A 290-amino-acid chain; its full sequence is MLPDSSVRLNKYISESGICSRREADRYIEQGNVFLNGKRATIGDQVKPGDVVKVNGQLIEPREAEDLVLIALNKPVGIVSTTEDGERDNIVDFVNHSKRVFPIGRLDKDSQGLIFLTNHGDLVNKILRAGNDHEKEYLVTVDKPITDEFIRGMGAGVPILGTVTKKCKVKKEAPFVFRITLVQGLNRQIRRMCEHFGYEVKKLERTRIMNVSLSGIPLGEWRDLTDDELIDLFKLIENSSSEAKPKAKAKPKTAGIKRPVVKMEKTAEKGGRPASNGKRFTSPGRKKKGR.

The 66-residue stretch at 7 to 72 (VRLNKYISES…EAEDLVLIAL (66 aa)) folds into the S4 RNA-binding domain. 2 interaction with RNA regions span residues 105 to 108 (RLDK) and 187 to 190 (RQIR). Asp107 acts as the Nucleophile in catalysis. The interval 241–290 (SEAKPKAKAKPKTAGIKRPVVKMEKTAEKGGRPASNGKRFTSPGRKKKGR) is disordered. The span at 261-271 (VKMEKTAEKGG) shows a compositional bias: basic and acidic residues.

The protein belongs to the pseudouridine synthase RsuA family. As to quaternary structure, monomer.

The enzyme catalyses uridine(2604) in 23S rRNA = pseudouridine(2604) in 23S rRNA. It catalyses the reaction uridine(35) in tRNA(Tyr) = pseudouridine(35) in tRNA(Tyr). In terms of biological role, dual specificity enzyme that catalyzes the synthesis of pseudouridine from uracil-2604 in 23S ribosomal RNA and from uracil-35 in the anticodon of tRNA(Tyr). The protein is Dual-specificity RNA pseudouridine synthase RluF (rluF) of Escherichia coli O157:H7.